The chain runs to 146 residues: BCL7-like protein (146 aa).

The segment at 59–146 (MAPPKIKEVK…RDAEMTSKQP (88 aa)) is disordered. Composition is skewed to polar residues over residues 75–90 (NQVPSAENSQDSTSVT) and 113–134 (DSNQTFEPQNYQGGATGSTDFS). Positions 135–146 (SMRDAEMTSKQP) are enriched in basic and acidic residues.

Belongs to the BCL7 family. As to expression, ubiquitous.

The protein resides in the nucleus. Required for the terminal differentiation of seam cells, and the differentiation of distal tip cells important for normal somatic gonad and germ cell development. Plays a role in the Wnt signaling pathway, regulating the expression of beta-catenin homologs wrm-1, bar-1 and sys-1, and the localization of wrm-1 and the wnt signaling pathway component pop-1 during asymmetric cell division of seam cells and the Z-cell lineage of the somatic gonad, respectively. May have a pro-apoptotic role, possibly linked to the negative regulation of expression of anti-apoptotic factor ced-9. The chain is BCL7-like protein from Caenorhabditis elegans.